The chain runs to 337 residues: Biotin synthase 1 (337 aa).

Positions 1–23 are disordered; that stretch reads MSSVLTQPLAFHPPRPAVQPREH. A Radical SAM core domain is found at 57 to 284; that stretch reads TRVEFATLLS…TARVRLSAGR (228 aa). [4Fe-4S] cluster is bound by residues cysteine 72, cysteine 76, and cysteine 79. [2Fe-2S] cluster contacts are provided by cysteine 116, cysteine 147, cysteine 207, and arginine 279.

Belongs to the radical SAM superfamily. Biotin synthase family. Homodimer. The cofactor is [4Fe-4S] cluster. [2Fe-2S] cluster is required as a cofactor.

It catalyses the reaction (4R,5S)-dethiobiotin + (sulfur carrier)-SH + 2 reduced [2Fe-2S]-[ferredoxin] + 2 S-adenosyl-L-methionine = (sulfur carrier)-H + biotin + 2 5'-deoxyadenosine + 2 L-methionine + 2 oxidized [2Fe-2S]-[ferredoxin]. Its pathway is cofactor biosynthesis; biotin biosynthesis; biotin from 7,8-diaminononanoate: step 2/2. In terms of biological role, catalyzes the conversion of dethiobiotin (DTB) to biotin by the insertion of a sulfur atom into dethiobiotin via a radical-based mechanism. The chain is Biotin synthase 1 from Polaromonas sp. (strain JS666 / ATCC BAA-500).